A 94-amino-acid polypeptide reads, in one-letter code: Phormicin (94 aa).

An N-terminal signal peptide occupies residues 1 to 23 (MKFFMVFVVTFCLAVCFVSQSLA). A propeptide spanning residues 24–54 (IPADAANDAHFVDGVQALKEIEPELHGRYKR) is cleaved from the precursor. Disulfide bonds link cysteine 57/cysteine 84, cysteine 70/cysteine 90, and cysteine 74/cysteine 92.

It belongs to the invertebrate defensin family. Type 1 subfamily.

The protein localises to the secreted. Its function is as follows. Responsible for the anti Gram-positive activity of immune hemolymph of P.terraenovae. The chain is Phormicin from Protophormia terraenovae (Northern blowfly).